A 708-amino-acid polypeptide reads, in one-letter code: ARF GTPase-activating protein GIT2 (708 aa).

An Arf-GAP domain is found at 1–124 (MSKRLRSSDV…AFVHRLPCRE (124 aa)). The segment at 11–34 (CADCNGPDPSWASVNRGTFICDEC) adopts a C4-type zinc-finger fold. 3 ANK repeats span residues 132-161 (DLSK…QANF), 166-195 (KGST…DPGT), and 199-228 (SGKT…ELTD). Residues 376 to 592 (STQHSTESQD…SPTLPSTEDV (217 aa)) are disordered. The span at 384–401 (QDNDQPDYDSVASDEDTD) shows a compositional bias: acidic residues. A phosphoserine mark is found at S393 and S396. T400 carries the post-translational modification Phosphothreonine. The span at 407 to 438 (SKANRQKLQTLQSENSSLRRQATASACQVQTG) shows a compositional bias: polar residues. A compositionally biased stretch (low complexity) spans 504–518 (TSSSSLPSFPSTLSW). Phosphoserine occurs at positions 508, 511, and 519. The span at 519–532 (SRDESARRASRLEK) shows a compositional bias: basic and acidic residues. A Phosphothreonine modification is found at T536. Position 563 is a phosphoserine (S563).

May form heterooligomers with GIT1. Directly interacts with protein Piccolo/PCLO. Interacts with PPFIA1 and PPFIA2. Interacts with ARHGEF7. Identified in a complex with ARHGEF6 and BIN2. Interacts with PAK3. Interacts with PXN/paxillin. Interacts with TGFB1I1. Forms a complex with EFNB1 and GRB4/NCK2. Tyrosine phosphorylated when coexpressed in cells with PTK2/FAK1 and SRC. In terms of tissue distribution, expressed in the brain (at protein level).

In terms of biological role, GTPase-activating protein for ADP ribosylation factor family members, including ARF1. The polypeptide is ARF GTPase-activating protein GIT2 (Git2) (Mus musculus (Mouse)).